The sequence spans 431 residues: Histidinol dehydrogenase (431 aa).

Residues Tyr-131, Gln-193, and Asn-216 each contribute to the NAD(+) site. Positions 239, 261, and 264 each coordinate substrate. Zn(2+) is bound by residues Gln-261 and His-264. Catalysis depends on proton acceptor residues Glu-329 and His-330. Substrate contacts are provided by His-330, Asp-363, Glu-417, and His-422. Asp-363 serves as a coordination point for Zn(2+). Zn(2+) is bound at residue His-422.

The protein belongs to the histidinol dehydrogenase family. Zn(2+) serves as cofactor.

The catalysed reaction is L-histidinol + 2 NAD(+) + H2O = L-histidine + 2 NADH + 3 H(+). It participates in amino-acid biosynthesis; L-histidine biosynthesis; L-histidine from 5-phospho-alpha-D-ribose 1-diphosphate: step 9/9. Its function is as follows. Catalyzes the sequential NAD-dependent oxidations of L-histidinol to L-histidinaldehyde and then to L-histidine. This chain is Histidinol dehydrogenase, found in Clostridium acetobutylicum (strain ATCC 824 / DSM 792 / JCM 1419 / IAM 19013 / LMG 5710 / NBRC 13948 / NRRL B-527 / VKM B-1787 / 2291 / W).